A 1385-amino-acid chain; its full sequence is DNA-directed RNA polymerase subunit beta' (1385 aa).

Zn(2+) contacts are provided by Cys-75, Cys-77, Cys-90, and Cys-93. Mg(2+)-binding residues include Asp-466, Asp-468, and Asp-470. Cys-809, Cys-883, Cys-890, and Cys-893 together coordinate Zn(2+).

Belongs to the RNA polymerase beta' chain family. The RNAP catalytic core consists of 2 alpha, 1 beta, 1 beta' and 1 omega subunit. When a sigma factor is associated with the core the holoenzyme is formed, which can initiate transcription. Mg(2+) serves as cofactor. The cofactor is Zn(2+).

It catalyses the reaction RNA(n) + a ribonucleoside 5'-triphosphate = RNA(n+1) + diphosphate. Its function is as follows. DNA-dependent RNA polymerase catalyzes the transcription of DNA into RNA using the four ribonucleoside triphosphates as substrates. The polypeptide is DNA-directed RNA polymerase subunit beta' (Nitratidesulfovibrio vulgaris (strain ATCC 29579 / DSM 644 / CCUG 34227 / NCIMB 8303 / VKM B-1760 / Hildenborough) (Desulfovibrio vulgaris)).